We begin with the raw amino-acid sequence, 81 residues long: Photosystem I iron-sulfur center (81 aa).

4Fe-4S ferredoxin-type domains follow at residues 2 to 31 (AHSV…MIPW) and 39 to 68 (IASA…VRVY). [4Fe-4S] cluster contacts are provided by Cys-11, Cys-14, Cys-17, Cys-21, Cys-48, Cys-51, Cys-54, and Cys-58.

In terms of assembly, the eukaryotic PSI reaction center is composed of at least 11 subunits. The cofactor is [4Fe-4S] cluster.

It localises to the plastid. The protein localises to the chloroplast thylakoid membrane. It carries out the reaction reduced [plastocyanin] + hnu + oxidized [2Fe-2S]-[ferredoxin] = oxidized [plastocyanin] + reduced [2Fe-2S]-[ferredoxin]. Functionally, apoprotein for the two 4Fe-4S centers FA and FB of photosystem I (PSI); essential for photochemical activity. FB is the terminal electron acceptor of PSI, donating electrons to ferredoxin. The C-terminus interacts with PsaA/B/D and helps assemble the protein into the PSI complex. Required for binding of PsaD and PsaE to PSI. PSI is a plastocyanin-ferredoxin oxidoreductase, converting photonic excitation into a charge separation, which transfers an electron from the donor P700 chlorophyll pair to the spectroscopically characterized acceptors A0, A1, FX, FA and FB in turn. This is Photosystem I iron-sulfur center from Cycas taitungensis (Prince sago).